A 423-amino-acid polypeptide reads, in one-letter code: SH2 domain-containing protein 5 (423 aa).

Residues 28 to 146 form the PID domain; it reads AQYVGLLPCG…LLCRSFQLAY (119 aa). Residues 296 to 392 enclose the SH2 domain; it reads WAFAGISRPC…LDMGRLNPTY (97 aa). Residues 394–423 are disordered; it reads EQDCGPLGRPPRTLRPLSHAKSEAELQGLG. Over residues 398–410 the composition is skewed to low complexity; sequence GPLGRPPRTLRPL.

In terms of assembly, interacts with BCR.

It is found in the postsynaptic density. May be involved in synaptic plasticity regulation through the control of Rac-GTP levels. The chain is SH2 domain-containing protein 5 from Pongo abelii (Sumatran orangutan).